Consider the following 374-residue polypeptide: Cathepsin W (374 aa).

The N-terminal stretch at 1–21 is a signal peptide; sequence MAITVYLSCLLVLSMAGLAQG. Residues 22 to 127 constitute a propeptide that is removed on maturation; that stretch reads IKSSLRSQDP…EVGSEEWGES (106 aa). Disulfide bonds link Cys-150-Cys-191 and Cys-184-Cys-226. Residue Cys-153 is part of the active site. The N-linked (GlcNAc...) asparagine glycan is linked to Asn-205. Catalysis depends on residues His-291 and Asn-329. Asn-347 carries an N-linked (GlcNAc...) asparagine glycan.

This sequence belongs to the peptidase C1 family.

Its subcellular location is the endoplasmic reticulum. Functionally, may have a specific function in the mechanism or regulation of T-cell cytolytic activity. The polypeptide is Cathepsin W (CTSW) (Felis catus (Cat)).